A 404-amino-acid chain; its full sequence is Cysteine desulfurase IscS (404 aa).

Residues 75–76, asparagine 155, glutamine 183, and 203–205 each bind pyridoxal 5'-phosphate; these read AT and SAH. N6-(pyridoxal phosphate)lysine is present on lysine 206. Residue threonine 243 participates in pyridoxal 5'-phosphate binding. Residue cysteine 328 is the Cysteine persulfide intermediate of the active site. Position 328 (cysteine 328) interacts with [2Fe-2S] cluster.

It belongs to the class-V pyridoxal-phosphate-dependent aminotransferase family. NifS/IscS subfamily. Homodimer. Forms a heterotetramer with IscU, interacts with other sulfur acceptors. The cofactor is pyridoxal 5'-phosphate.

It is found in the cytoplasm. It catalyses the reaction (sulfur carrier)-H + L-cysteine = (sulfur carrier)-SH + L-alanine. The protein operates within cofactor biosynthesis; iron-sulfur cluster biosynthesis. Master enzyme that delivers sulfur to a number of partners involved in Fe-S cluster assembly, tRNA modification or cofactor biosynthesis. Catalyzes the removal of elemental sulfur atoms from cysteine to produce alanine. Functions as a sulfur delivery protein for Fe-S cluster synthesis onto IscU, an Fe-S scaffold assembly protein, as well as other S acceptor proteins. This is Cysteine desulfurase IscS from Azotobacter vinelandii (strain DJ / ATCC BAA-1303).